The following is an 827-amino-acid chain: Leucine--tRNA ligase (827 aa).

Residues 42–52 carry the 'HIGH' region motif; the sequence is PYPSGKLHMGH. Residues 581–585 carry the 'KMSKS' region motif; sequence KMSKS. Lys584 contributes to the ATP binding site.

This sequence belongs to the class-I aminoacyl-tRNA synthetase family.

Its subcellular location is the cytoplasm. It catalyses the reaction tRNA(Leu) + L-leucine + ATP = L-leucyl-tRNA(Leu) + AMP + diphosphate. The sequence is that of Leucine--tRNA ligase from Desulforamulus reducens (strain ATCC BAA-1160 / DSM 100696 / MI-1) (Desulfotomaculum reducens).